A 392-amino-acid polypeptide reads, in one-letter code: ATP phosphoribosyltransferase regulatory subunit (392 aa).

The protein belongs to the class-II aminoacyl-tRNA synthetase family. HisZ subfamily. In terms of assembly, heteromultimer composed of HisG and HisZ subunits.

It is found in the cytoplasm. It functions in the pathway amino-acid biosynthesis; L-histidine biosynthesis; L-histidine from 5-phospho-alpha-D-ribose 1-diphosphate: step 1/9. Functionally, required for the first step of histidine biosynthesis. May allow the feedback regulation of ATP phosphoribosyltransferase activity by histidine. This Listeria monocytogenes serotype 4b (strain F2365) protein is ATP phosphoribosyltransferase regulatory subunit.